A 243-amino-acid chain; its full sequence is MRKTVIAGNWKMHMTCSSAKEYIDKFIPFSKEFPSDRHVVIAPPFTAISTLASLLQGTNIQLSSQNVHWEDTGAFTAEISPSMLLEHDVRYAIVGHSEPRKYFSESDEQINLRARSAQSNGLIPIVCVGESIEQRERGEAERVIRRQVEQGLEQTDLTKLVIAYEPIWAIGTGKTCESNEANRICGLIREWAGFSDLIIQYGGSVKPANIDEIMSMSDIDGVLVGGASLDPENFARIANYQSI.

9–11 lines the substrate pocket; it reads NWK. H96 functions as the Electrophile in the catalytic mechanism. The active-site Proton acceptor is the E165. Substrate contacts are provided by residues G171, S204, and 225 to 226; that span reads GG.

The protein belongs to the triosephosphate isomerase family. In terms of assembly, homodimer.

The protein resides in the cytoplasm. It catalyses the reaction D-glyceraldehyde 3-phosphate = dihydroxyacetone phosphate. It functions in the pathway carbohydrate biosynthesis; gluconeogenesis. The protein operates within carbohydrate degradation; glycolysis; D-glyceraldehyde 3-phosphate from glycerone phosphate: step 1/1. Involved in the gluconeogenesis. Catalyzes stereospecifically the conversion of dihydroxyacetone phosphate (DHAP) to D-glyceraldehyde-3-phosphate (G3P). This Prochlorococcus marinus (strain SARG / CCMP1375 / SS120) protein is Triosephosphate isomerase.